We begin with the raw amino-acid sequence, 98 residues long: NADH-ubiquinone oxidoreductase chain 4L (98 aa).

The next 3 helical transmembrane spans lie at 2–22 (SLVY…LLMF), 29–49 (SLLC…ILIL), and 61–81 (IIML…LVMV).

This sequence belongs to the complex I subunit 4L family. As to quaternary structure, core subunit of respiratory chain NADH dehydrogenase (Complex I) which is composed of 45 different subunits.

It is found in the mitochondrion inner membrane. It catalyses the reaction a ubiquinone + NADH + 5 H(+)(in) = a ubiquinol + NAD(+) + 4 H(+)(out). Its function is as follows. Core subunit of the mitochondrial membrane respiratory chain NADH dehydrogenase (Complex I) which catalyzes electron transfer from NADH through the respiratory chain, using ubiquinone as an electron acceptor. Part of the enzyme membrane arm which is embedded in the lipid bilayer and involved in proton translocation. The sequence is that of NADH-ubiquinone oxidoreductase chain 4L (MT-ND4L) from Galemys pyrenaicus (Iberian desman).